The primary structure comprises 199 residues: Prolactin (199 aa).

The cysteines at positions 4 and 11 are disulfide-linked. A phosphoserine mark is found at S26, S34, and S90. 2 disulfide bridges follow: C58–C174 and C191–C199.

This sequence belongs to the somatotropin/prolactin family. Interacts with PRLR.

It localises to the secreted. In terms of biological role, prolactin acts primarily on the mammary gland by promoting lactation. The protein is Prolactin (PRL) of Loxodonta africana (African elephant).